A 248-amino-acid polypeptide reads, in one-letter code: Protein LIFEGUARD 3 (248 aa).

Transmembrane regions (helical) follow at residues 42 to 62, 74 to 94, 105 to 125, 130 to 150, 165 to 185, 188 to 208, and 222 to 242; these read VYSIIAFQLLATVAVAATVVT, GLGLALYIVIIITPLIVLCPL, YLLLGIFTLALAFVVGLTCAF, VILESVILTSVVVLSLTLYTF, FLFGALTVLIFFALIQILFPL, VSVMIYGCLVSIIFCGYIVYD, and IWAAVSLYLDIINLFLYLLTV.

The protein belongs to the BI1 family.

It is found in the membrane. The chain is Protein LIFEGUARD 3 from Arabidopsis thaliana (Mouse-ear cress).